We begin with the raw amino-acid sequence, 203 residues long: Dual-action ribosomal maturation protein DarP (203 aa).

Disordered regions lie at residues 1–31 (MTRKTRIQTIESAEPEVDENGYDRPSKSQLK) and 178–203 (NADGPPAQTDSEADDAQDDEDDDRDA). Residues 21–31 (GYDRPSKSQLK) show a composition bias toward basic and acidic residues. Positions 188–203 (SEADDAQDDEDDDRDA) are enriched in acidic residues.

The protein belongs to the DarP family.

The protein localises to the cytoplasm. In terms of biological role, member of a network of 50S ribosomal subunit biogenesis factors which assembles along the 30S-50S interface, preventing incorrect 23S rRNA structures from forming. Promotes peptidyl transferase center (PTC) maturation. The polypeptide is Dual-action ribosomal maturation protein DarP (Paraburkholderia xenovorans (strain LB400)).